Here is a 155-residue protein sequence, read N- to C-terminus: Interleukin-2 (155 aa).

An N-terminal signal peptide occupies residues methionine 1 to serine 20. The O-linked (GalNAc...) threonine glycan is linked to threonine 23. Cysteine 78 and cysteine 126 are oxidised to a cystine.

This sequence belongs to the IL-2 family.

It localises to the secreted. Cytokine produced by activated CD4-positive helper T-cells and to a lesser extend activated CD8-positive T-cells and natural killer (NK) cells that plays pivotal roles in the immune response and tolerance. Binds to a receptor complex composed of either the high-affinity trimeric IL-2R (IL2RA/CD25, IL2RB/CD122 and IL2RG/CD132) or the low-affinity dimeric IL-2R (IL2RB and IL2RG). Interaction with the receptor leads to oligomerization and conformation changes in the IL-2R subunits resulting in downstream signaling starting with phosphorylation of JAK1 and JAK3. In turn, JAK1 and JAK3 phosphorylate the receptor to form a docking site leading to the phosphorylation of several substrates including STAT5. This process leads to activation of several pathways including STAT, phosphoinositide-3-kinase/PI3K and mitogen-activated protein kinase/MAPK pathways. Functions as a T-cell growth factor and can increase NK-cell cytolytic activity as well. Promotes strong proliferation of activated B-cells and subsequently immunoglobulin production. Plays a pivotal role in regulating the adaptive immune system by controlling the survival and proliferation of regulatory T-cells, which are required for the maintenance of immune tolerance. Moreover, participates in the differentiation and homeostasis of effector T-cell subsets, including Th1, Th2, Th17 as well as memory CD8-positive T-cells. The polypeptide is Interleukin-2 (IL2) (Meriones unguiculatus (Mongolian jird)).